We begin with the raw amino-acid sequence, 271 residues long: Norsolorinic acid ketoreductase (271 aa).

Residues 1-22 form a disordered region; that stretch reads MNGSLSQHDQERLSTPYRDGPP. NADP(+) contacts are provided by Ile-36, Asn-112, Tyr-185, Lys-189, Val-216, and Thr-218. Tyr-185 acts as the Proton donor in catalysis. Lys-189 serves as the catalytic Lowers pKa of active site Tyr.

The protein belongs to the short-chain dehydrogenases/reductases (SDR) family.

The protein resides in the cytoplasm. The protein localises to the cytosol. Its subcellular location is the vacuole. The enzyme catalyses (1'S)-averantin + NADP(+) = norsolorinic acid + NADPH + H(+). The protein operates within mycotoxin biosynthesis; aflatoxin biosynthesis. Norsolorinic acid ketoreductase; part of the gene cluster that mediates the biosynthesis of aflatoxins, a group of polyketide-derived furanocoumarins, and part of the most toxic and carcinogenic compounds among the known mycotoxins. The four major aflatoxins produced by A.parasiticus are aflatoxin B1 (AFB1), aflatoxin B2 (AFB2), aflatoxin G1 (AFG1) and aflatoxin G2 (AFG2). Within the aflatoxin pathway, the norsolorinic acid ketoreductase aflD performs the second step by catalyzing the dehydration of norsolorinic acid (NOR) to form (1'S)-averantin (AVN). The biosynthesis of aflatoxins begins with the norsolorinic acid synthase aflC that combines a hexanoyl starter unit produced by the fatty acid synthase aflA/aflB and 7 malonyl-CoA extender units to synthesize the precursor NOR. The second step is the conversion of NOR to averantin and requires the norsolorinic acid ketoreductase aflD, which catalyzes the dehydration of norsolorinic acid to form (1'S)-averantin. The norsolorinic acid reductases aflE and aflF may also play a role in the conversion of NOR to AVN. The cytochrome P450 monooxygenase aflG then catalyzes the hydroxylation of AVN to 5'hydroxyaverantin (HAVN). The next step is performed by the 5'-hydroxyaverantin dehydrogenase aflH that transforms HAVN to 5'-oxoaverantin (OAVN) which is further converted to averufin (AVF) by aflK that plays a dual role in the pathway, as a 5'-oxoaverantin cyclase that mediates conversion of 5'-oxoaverantin, as well as a versicolorin B synthase in a later step in the pathway. The averufin oxidase aflI catalyzes the conversion of AVF to versiconal hemiacetal acetate (VHA). VHA is then the substrate for the versiconal hemiacetal acetate esterase aflJ to yield versiconal (VAL). Versicolorin B synthase aflK then converts VAL to versicolorin B (VERB) by closing the bisfuran ring of aflatoxin which is required for DNA-binding, thus giving to aflatoxin its activity as a mutagen. Then, the activity of the versicolorin B desaturase aflL leads to versicolorin A (VERA). A branch point starts from VERB since it can also be converted to dihydrodemethylsterigmatocystin (DMDHST), probably also by aflL, VERA being a precursor for aflatoxins B1 and G1, and DMDHST for aflatoxins B2 and G2. Next, the versicolorin reductase aflM and the cytochrome P450 monooxygenase aflN are involved in conversion of VERA to demethylsterigmatocystin (DMST). AflX and aflY seem also involved in this step, through probable aflX-mediated epoxide ring-opening step following versicolorin A oxidation and aflY-mediated Baeyer-Villiger oxidation required for the formation of the xanthone ring. The methyltransferase aflO then leads to the modification of DMST to sterigmatocystin (ST), and of DMDHST to dihydrosterigmatocystin (DHST). Both ST and DHST are then substrates of the O-methyltransferase aflP to yield O-methylsterigmatocystin (OMST) and dihydro-O-methylsterigmatocystin (DHOMST), respectively. Finally OMST is converted to aflatoxins B1 and G1, and DHOMST to aflatoxins B2 and G2, via the action of several enzymes including O-methylsterigmatocystin oxidoreductase aflQ, the cytochrome P450 monooxygenase aflU, but also the NADH-dependent flavin oxidoreductase nadA which is specifically required for the synthesis of AFG1. This Aspergillus parasiticus (strain ATCC 56775 / NRRL 5862 / SRRC 143 / SU-1) protein is Norsolorinic acid ketoreductase.